Here is a 347-residue protein sequence, read N- to C-terminus: Phenylalanine--tRNA ligase alpha subunit (347 aa).

Glutamate 265 lines the Mg(2+) pocket.

This sequence belongs to the class-II aminoacyl-tRNA synthetase family. Phe-tRNA synthetase alpha subunit type 1 subfamily. As to quaternary structure, tetramer of two alpha and two beta subunits. Mg(2+) serves as cofactor.

The protein resides in the cytoplasm. The catalysed reaction is tRNA(Phe) + L-phenylalanine + ATP = L-phenylalanyl-tRNA(Phe) + AMP + diphosphate + H(+). The sequence is that of Phenylalanine--tRNA ligase alpha subunit from Mycolicibacterium gilvum (strain PYR-GCK) (Mycobacterium gilvum (strain PYR-GCK)).